The chain runs to 215 residues: Pyridoxine/pyridoxamine 5'-phosphate oxidase (215 aa).

Residues 9–12 (RKEY) and Lys-67 contribute to the substrate site. FMN-binding positions include 62-67 (RIVLLK), 77-78 (YT), Lys-84, and Gln-106. The substrate site is built by Tyr-124, Arg-128, and Ser-132. FMN-binding positions include 141–142 (QS) and Trp-187. Substrate is bound at residue 193–195 (RLH). Residue Arg-197 coordinates FMN.

The protein belongs to the pyridoxamine 5'-phosphate oxidase family. Homodimer. The cofactor is FMN.

The catalysed reaction is pyridoxamine 5'-phosphate + O2 + H2O = pyridoxal 5'-phosphate + H2O2 + NH4(+). It carries out the reaction pyridoxine 5'-phosphate + O2 = pyridoxal 5'-phosphate + H2O2. The protein operates within cofactor metabolism; pyridoxal 5'-phosphate salvage; pyridoxal 5'-phosphate from pyridoxamine 5'-phosphate: step 1/1. It participates in cofactor metabolism; pyridoxal 5'-phosphate salvage; pyridoxal 5'-phosphate from pyridoxine 5'-phosphate: step 1/1. In terms of biological role, catalyzes the oxidation of either pyridoxine 5'-phosphate (PNP) or pyridoxamine 5'-phosphate (PMP) into pyridoxal 5'-phosphate (PLP). The protein is Pyridoxine/pyridoxamine 5'-phosphate oxidase of Cytophaga hutchinsonii (strain ATCC 33406 / DSM 1761 / CIP 103989 / NBRC 15051 / NCIMB 9469 / D465).